The chain runs to 183 residues: DELTA-miturgitoxin-Cp1a (183 aa).

The N-terminal stretch at 1-20 (MKFSLFFSVFFLAVLHACLS) is a signal peptide. Residues 21-47 (ESEIDLEDEEHFMSSDSFLSEIQDESR) constitute a propeptide that is removed on maturation. The Processing quadruplet motif signature appears at 44–47 (DESR). Cystine bridges form between cysteine 51–cysteine 66, cysteine 58–cysteine 75, cysteine 65–cysteine 88, cysteine 77–cysteine 86, cysteine 115–cysteine 130, cysteine 122–cysteine 139, cysteine 129–cysteine 157, and cysteine 141–cysteine 155. 2 Domain repeats span residues 51 to 77 (CIER…KCTC) and 115 to 141 (CVPK…QCKC). Residues 51–141 (CIERNKECTN…GGIFKYQCKC (91 aa)) form a 2 X approximate repeats with cysteine pattern C-C-CC-C-C region. The interval 164–177 (QAIEGALRIAKKLI) is predicted alpha-helix. The residue at position 181 (tryptophan 181) is a Tryptophan amide.

This sequence belongs to the neurotoxin 19 (CSTX) family. Double-CSTX subfamily. Post-translationally, cleavage of the propeptide depends on the processing quadruplet motif (XXXR, with at least one of X being E). As to expression, expressed by the venom gland.

It is found in the secreted. The protein localises to the target cell membrane. Spider venom toxin that exhibits cytolytic activity by forming an alpha-helix across the membrane. Lethal to insect larvae. Causes instant paralysis and death in the larvae of the flesh fly (S.carnaria) at doses of 20 ug/g, at doses of less than 10 ug/g causes reversible paralysis. Has cytolytic activity against insect Sf9 cells. Causes stable and irreversible depolarization of fly muscle fibers, leading to contracture at higher toxin concentrations. Destabilizes membranes. The polypeptide is DELTA-miturgitoxin-Cp1a (Cheiracanthium punctorium (Yellow sac spider)).